Consider the following 72-residue polypeptide: Translation initiation factor IF-1 (72 aa).

One can recognise an S1-like domain in the interval methionine 1–lysine 72.

Belongs to the IF-1 family. Component of the 30S ribosomal translation pre-initiation complex which assembles on the 30S ribosome in the order IF-2 and IF-3, IF-1 and N-formylmethionyl-tRNA(fMet); mRNA recruitment can occur at any time during PIC assembly.

It is found in the cytoplasm. Its function is as follows. One of the essential components for the initiation of protein synthesis. Stabilizes the binding of IF-2 and IF-3 on the 30S subunit to which N-formylmethionyl-tRNA(fMet) subsequently binds. Helps modulate mRNA selection, yielding the 30S pre-initiation complex (PIC). Upon addition of the 50S ribosomal subunit IF-1, IF-2 and IF-3 are released leaving the mature 70S translation initiation complex. The chain is Translation initiation factor IF-1 from Xanthomonas campestris pv. campestris (strain B100).